Here is a 253-residue protein sequence, read N- to C-terminus: Triosephosphate isomerase (253 aa).

13-15 serves as a coordination point for substrate; the sequence is NWK. Catalysis depends on H100, which acts as the Electrophile. E169 serves as the catalytic Proton acceptor. Substrate contacts are provided by residues G175, S208, and 229 to 230; that span reads GG.

The protein belongs to the triosephosphate isomerase family. In terms of assembly, homodimer.

It localises to the cytoplasm. It catalyses the reaction D-glyceraldehyde 3-phosphate = dihydroxyacetone phosphate. It participates in carbohydrate biosynthesis; gluconeogenesis. Its pathway is carbohydrate degradation; glycolysis; D-glyceraldehyde 3-phosphate from glycerone phosphate: step 1/1. Functionally, involved in the gluconeogenesis. Catalyzes stereospecifically the conversion of dihydroxyacetone phosphate (DHAP) to D-glyceraldehyde-3-phosphate (G3P). The chain is Triosephosphate isomerase from Synechococcus sp. (strain RCC307).